We begin with the raw amino-acid sequence, 87 residues long: Sec-independent protein translocase protein TatA (87 aa).

A helical membrane pass occupies residues 1-21 (MGSFSITHWLILLVVVVVVFG). The segment at 56 to 87 (VLDHDAGTNPPNITGTQSDTTSANKVDDTHNV) is disordered. The segment covering 64–79 (NPPNITGTQSDTTSAN) has biased composition (polar residues).

This sequence belongs to the TatA/E family. In terms of assembly, the Tat system comprises two distinct complexes: a TatABC complex, containing multiple copies of TatA, TatB and TatC subunits, and a separate TatA complex, containing only TatA subunits. Substrates initially bind to the TatABC complex, which probably triggers association of the separate TatA complex to form the active translocon.

It localises to the cell inner membrane. Its function is as follows. Part of the twin-arginine translocation (Tat) system that transports large folded proteins containing a characteristic twin-arginine motif in their signal peptide across membranes. TatA could form the protein-conducting channel of the Tat system. The protein is Sec-independent protein translocase protein TatA of Psychrobacter arcticus (strain DSM 17307 / VKM B-2377 / 273-4).